Consider the following 97-residue polypeptide: MALLIVILSMFYLGLMGILLNRLHFLSILLCLELLLISLFIGIAIWNNNTGVPQNTTFNLFVLTLVACEASIGLSLMVGLSRTHSSNLVGSLSLLQY.

3 helical membrane-spanning segments follow: residues 1 to 21, 25 to 45, and 60 to 80; these read MALLIVILSMFYLGLMGILLN, FLSILLCLELLLISLFIGIAI, and LFVLTLVACEASIGLSLMVGL.

It belongs to the complex I subunit 4L family.

Its subcellular location is the mitochondrion membrane. It carries out the reaction a ubiquinone + NADH + 5 H(+)(in) = a ubiquinol + NAD(+) + 4 H(+)(out). Functionally, core subunit of the mitochondrial membrane respiratory chain NADH dehydrogenase (Complex I) that is believed to belong to the minimal assembly required for catalysis. Complex I functions in the transfer of electrons from NADH to the respiratory chain. The immediate electron acceptor for the enzyme is believed to be ubiquinone. The chain is NADH-ubiquinone oxidoreductase chain 4L (ND4L) from Strongylocentrotus purpuratus (Purple sea urchin).